The following is a 369-amino-acid chain: MASVQLRNVTKAWGDVVVSKDINLDIHDGEFVVFVGPSGCGKSTLLRMIAGLETITSGDLFIGETRMNDIPPAERGVGMVFQSYALYPHLSVAENMSFGLKLAGAKKEVMNQRVNQVAEVLQLAHLLERKPKALSGGQRQRVAIGRTLVAEPRVFLLDEPLSNLDAALRVQMRIEISRLHKRLGRTMIYVTHDQVEAMTLADKIVVLDAGRVAQVGKPLELYHYPADRFVAGFIGSPKMNFLPVKVTATAIEQVQVELPNRQQIWLPVESRGVQVGANMSLGIRPEHLLPSDIADVTLEGEVQVVEQLGHETQIYIQIPAIRQNLVYRQNDVVLVEEGATFAIGLPPERCHLFREDGSACRRLHQEPGV.

The region spanning 4–234 (VQLRNVTKAW…PADRFVAGFI (231 aa)) is the ABC transporter domain. 36-43 (GPSGCGKS) provides a ligand contact to ATP.

Belongs to the ABC transporter superfamily. Maltooligosaccharide importer (TC 3.A.1.1.1) family. As to quaternary structure, the complex is composed of two ATP-binding proteins (MalK), two transmembrane proteins (MalG and MalK) and a solute-binding protein (MalE).

It is found in the cell inner membrane. The enzyme catalyses D-maltose(out) + ATP + H2O = D-maltose(in) + ADP + phosphate + H(+). Part of the ABC transporter complex MalEFGK involved in maltose/maltodextrin import. Responsible for energy coupling to the transport system. The polypeptide is Maltose/maltodextrin import ATP-binding protein MalK (Salmonella typhi).